Consider the following 370-residue polypeptide: Putrescine-binding periplasmic protein PotF (370 aa).

An N-terminal signal peptide occupies residues 1–26 (MTALNKKWLSGLVAGALMAVSVGTLA). Ser38 serves as a coordination point for putrescine. Cysteines 175 and 239 form a disulfide. Putrescine contacts are provided by Asp247 and Asp278.

The protein belongs to the bacterial solute-binding protein PotD/PotF family. The complex is composed of two ATP-binding proteins (PotG), two transmembrane proteins (PotH and PotI) and a solute-binding protein (PotF).

Its subcellular location is the periplasm. With respect to regulation, transport is feedback inhibited by intracellular polyamines. In terms of biological role, part of the ABC transporter complex PotFGHI involved in putrescine uptake. Binds putrescine. Imports putrescine for maintenance of the optimal concentration of polyamines necessary for cell growth in the presence of glucose. This Escherichia coli (strain K12) protein is Putrescine-binding periplasmic protein PotF.